Consider the following 180-residue polypeptide: UPF0340 protein YwlG (180 aa).

Belongs to the UPF0340 family.

The chain is UPF0340 protein YwlG (ywlG) from Bacillus subtilis (strain 168).